Here is a 254-residue protein sequence, read N- to C-terminus: Putative electron transfer flavoprotein subunit YdiQ (254 aa).

The protein belongs to the ETF beta-subunit/FixA family. As to quaternary structure, ydiR and YdiQ form a heterodimer.

Its function is as follows. May play a role in a redox process. The polypeptide is Putative electron transfer flavoprotein subunit YdiQ (ydiQ) (Escherichia coli (strain K12)).